Consider the following 405-residue polypeptide: Insertion element IS110 uncharacterized 43.6 kDa protein (405 aa).

In Streptomyces coelicolor (strain ATCC BAA-471 / A3(2) / M145), this protein is Insertion element IS110 uncharacterized 43.6 kDa protein.